Reading from the N-terminus, the 724-residue chain is Ribosomal RNA large subunit methyltransferase K/L (724 aa).

The THUMP domain occupies 42-153 (DAQRLVLWSR…KGRATLSVDL (112 aa)).

Belongs to the methyltransferase superfamily. RlmKL family.

The protein resides in the cytoplasm. It carries out the reaction guanosine(2445) in 23S rRNA + S-adenosyl-L-methionine = N(2)-methylguanosine(2445) in 23S rRNA + S-adenosyl-L-homocysteine + H(+). It catalyses the reaction guanosine(2069) in 23S rRNA + S-adenosyl-L-methionine = N(2)-methylguanosine(2069) in 23S rRNA + S-adenosyl-L-homocysteine + H(+). Its function is as follows. Specifically methylates the guanine in position 2445 (m2G2445) and the guanine in position 2069 (m7G2069) of 23S rRNA. The chain is Ribosomal RNA large subunit methyltransferase K/L from Xylella fastidiosa (strain 9a5c).